Consider the following 541-residue polypeptide: Protein VAPYRIN (541 aa).

One can recognise an MSP domain in the interval 4–138; it reads LIKLDPSNIV…IDSAIKVMFV (135 aa). 10 ANK repeats span residues 176–205, 209–238, 242–271, 275–304, 309–338, 342–372, 374–392, 396–425, 429–458, and 462–491; these read QGQT…DIEA, VGST…NTEG, SVFR…RVDS, DGNT…RTDV, EGDT…TKYV, LGKT…CAAA, KGEV…VING, NGWT…DLDA, DGYT…DVEA, and KGVS…SREG.

In terms of assembly, interacts with EX70I at the periarbuscular membrane (PAM) around the arbuscule hyphal tips. Expressed in roots.

Its subcellular location is the cytoplasm. The protein localises to the nucleus. It is found in the cell membrane. Its function is as follows. Required for arbuscular mycorrhizal (AM) symbiosis with AM fungi (e.g. Glomus versiforme and Gigaspora gigantea) both during fungal passage across root epidermis and for arbuscule formation in cortical cells; this symbiosis promotes phosphorus (P) and copper (Cu) uptake. Essential for infection by symbiotic nitrogen-fixing rhizobial bacteria (e.g. Sinorhizobium meliloti) leading to the formation of root nodules. The sequence is that of Protein VAPYRIN from Medicago truncatula (Barrel medic).